The chain runs to 185 residues: Ribosome-recycling factor (185 aa).

It belongs to the RRF family.

It is found in the cytoplasm. Functionally, responsible for the release of ribosomes from messenger RNA at the termination of protein biosynthesis. May increase the efficiency of translation by recycling ribosomes from one round of translation to another. The protein is Ribosome-recycling factor of Dehalococcoides mccartyi (strain ATCC BAA-2266 / KCTC 15142 / 195) (Dehalococcoides ethenogenes (strain 195)).